The following is a 149-amino-acid chain: Urease accessory protein UreE (149 aa).

Belongs to the UreE family.

It is found in the cytoplasm. Functionally, involved in urease metallocenter assembly. Binds nickel. Probably functions as a nickel donor during metallocenter assembly. The polypeptide is Urease accessory protein UreE (Ruegeria pomeroyi (strain ATCC 700808 / DSM 15171 / DSS-3) (Silicibacter pomeroyi)).